The chain runs to 166 residues: uncharacterized protein (166 aa).

Composition is skewed to gly residues over residues 1 to 10 (MNYGNNGGGQ) and 76 to 86 (YRGGGGGGGGN). The tract at residues 1-117 (MNYGNNGGGQ…GGGNKNFGPI (117 aa)) is disordered.

This is an uncharacterized protein from Caenorhabditis elegans.